Reading from the N-terminus, the 425-residue chain is Pleckstrin homology domain-containing family A member 2 (425 aa).

The PH 1 domain maps to 7–113 (QNRICGFLDI…WVEALNQASK (107 aa)). Lys141 is covalently cross-linked (Glycyl lysine isopeptide (Lys-Gly) (interchain with G-Cter in SUMO2)). Ser184 is subject to Phosphoserine. A PH 2 domain is found at 198 to 298 (PLIKSGYCVK…WIEGIGAAVQ (101 aa)). The segment covering 310 to 331 (SRSISLTRPGSSTLTSAPNSIL) has biased composition (polar residues). Residues 310–425 (SRSISLTRPG…DDENIRTSDV (116 aa)) are disordered. Residues Ser314 and Ser349 each carry the phosphoserine modification. 2 stretches are compositionally biased toward basic and acidic residues: residues 363-375 (AEEK…HAPE) and 400-410 (RSEPQHPKEKP).

As to quaternary structure, binds MPDZ and PTPN13.

It is found in the cytoplasm. The protein localises to the cell membrane. The protein resides in the nucleus. Functionally, binds specifically to phosphatidylinositol 3,4-diphosphate (PtdIns3,4P2), but not to other phosphoinositides. May recruit other proteins to the plasma membrane. The sequence is that of Pleckstrin homology domain-containing family A member 2 (Plekha2) from Mus musculus (Mouse).